Consider the following 352-residue polypeptide: Fe-S cluster assembly protein DRE2 (352 aa).

Residues 1 to 11 (MAPTAVYTQKD) are compositionally biased toward polar residues. The disordered stretch occupies residues 1 to 24 (MAPTAVYTQKDSPSSSQPSSKGPA). The N-terminal SAM-like domain stretch occupies residues 1 to 196 (MAPTAVYTQK…TVTSAPSVPL (196 aa)). Positions 196-237 (LLLRKRGDPAKKKALWALTTDASASPSTKIDADALLTAEDKA) are linker. [2Fe-2S] cluster-binding residues include C243, C257, C260, and C262. Residues 243-262 (CAPVDRSAPRRKKACKNCSC) form a fe-S binding site A region. [4Fe-4S] cluster is bound by residues C315, C318, C326, and C329. Short sequence motifs (cx2C motif) lie at residues 315–318 (CGSC) and 326–329 (CAGC). Residues 315 to 329 (CGSCFLGDAFRCAGC) are fe-S binding site B.

The protein belongs to the anamorsin family. Monomer. Interacts with TAH18. Interacts with MIA40. It depends on [2Fe-2S] cluster as a cofactor. [4Fe-4S] cluster is required as a cofactor.

Its subcellular location is the cytoplasm. It is found in the mitochondrion intermembrane space. In terms of biological role, component of the cytosolic iron-sulfur (Fe-S) protein assembly (CIA) machinery required for the maturation of extramitochondrial Fe-S proteins. Part of an electron transfer chain functioning in an early step of cytosolic Fe-S biogenesis, facilitating the de novo assembly of a [4Fe-4S] cluster on the scaffold complex CFD1-NBP35. Electrons are transferred to DRE2 from NADPH via the FAD- and FMN-containing protein TAH18. TAH18-DRE2 are also required for the assembly of the diferric tyrosyl radical cofactor of ribonucleotide reductase (RNR), probably by providing electrons for reduction during radical cofactor maturation in the catalytic small subunit RNR2. This is Fe-S cluster assembly protein DRE2 from Coprinopsis cinerea (strain Okayama-7 / 130 / ATCC MYA-4618 / FGSC 9003) (Inky cap fungus).